The chain runs to 1096 residues: cAMP/cGMP-dependent 3',5'-cAMP/cGMP phosphodiesterase B (1096 aa).

The tract at residues 216 to 248 is disordered; sequence SSSKMIINDSPRTQQRNGTTEQQKKQQQQQYLQ. Positions 225–236 are enriched in polar residues; it reads SPRTQQRNGTTE. H573, H575, and D577 together coordinate a divalent metal cation. Residues 783 to 930 and 946 to 1070 each bind a nucleoside 3',5'-cyclic phosphate; these read VFSK…DLSH and ITQH…EDNI.

Belongs to the metallo-beta-lactamase superfamily. cNMP phosphodiesterase family. Mn(2+) serves as cofactor. The cofactor is Mg(2+). Requires Zn(2+) as cofactor.

The protein resides in the cytoplasm. It localises to the cytosol. The catalysed reaction is 3',5'-cyclic AMP + H2O = AMP + H(+). It catalyses the reaction 3',5'-cyclic GMP + H2O = GMP + H(+). Dual specificity cAMP and cGMP phosphodiesterase with marked preference for cyclic AMP, which is activated by cAMP and cGMP. Likely functions as a cAMP-stimulated cAMP-phosphodiesterase which may play a role in regulating the cAMP relay response. This chain is cAMP/cGMP-dependent 3',5'-cAMP/cGMP phosphodiesterase B (pdeE), found in Dictyostelium discoideum (Social amoeba).